The sequence spans 732 residues: Acylamino-acid-releasing enzyme (732 aa).

The residue at position 1 (methionine 1) is an N-acetylmethionine. A phosphoserine mark is found at serine 185 and serine 187. Residues serine 587, aspartate 675, and histidine 707 each act as charge relay system in the active site.

Homotetramer. As to expression, expressed in erythrocytes (at protein level).

Its subcellular location is the cytoplasm. It carries out the reaction Cleavage of an N-acetyl or N-formyl amino acid from the N-terminus of a polypeptide.. With respect to regulation, homotetramerization is required for activity. Tetramerization results in the formation of a gated channel which is involved in substrate selection and substrate access to the catalytic sites. Its function is as follows. This enzyme catalyzes the hydrolysis of the N-terminal peptide bond of an N-acetylated peptide to generate an N-acetylated amino acid and a peptide with a free N-terminus. It preferentially cleaves off Ac-Ala, Ac-Met and Ac-Ser. Also, involved in the degradation of oxidized and glycated proteins. In Homo sapiens (Human), this protein is Acylamino-acid-releasing enzyme (APEH).